The primary structure comprises 453 residues: UDP-N-acetylmuramoylalanine--D-glutamate ligase (453 aa).

117-123 (GSNGKST) is a binding site for ATP.

The protein belongs to the MurCDEF family.

The protein localises to the cytoplasm. It carries out the reaction UDP-N-acetyl-alpha-D-muramoyl-L-alanine + D-glutamate + ATP = UDP-N-acetyl-alpha-D-muramoyl-L-alanyl-D-glutamate + ADP + phosphate + H(+). It functions in the pathway cell wall biogenesis; peptidoglycan biosynthesis. Cell wall formation. Catalyzes the addition of glutamate to the nucleotide precursor UDP-N-acetylmuramoyl-L-alanine (UMA). This Chromobacterium violaceum (strain ATCC 12472 / DSM 30191 / JCM 1249 / CCUG 213 / NBRC 12614 / NCIMB 9131 / NCTC 9757 / MK) protein is UDP-N-acetylmuramoylalanine--D-glutamate ligase.